Here is a 169-residue protein sequence, read N- to C-terminus: Glutathione peroxidase (169 aa).

Residue U43 is part of the active site. Position 43 (U43) is a non-standard amino acid, selenocysteine.

This sequence belongs to the glutathione peroxidase family.

The enzyme catalyses 2 glutathione + H2O2 = glutathione disulfide + 2 H2O. The protein is Glutathione peroxidase (GPX1) of Schistosoma mansoni (Blood fluke).